Reading from the N-terminus, the 1119-residue chain is Protein translocase subunit SecA (1119 aa).

ATP contacts are provided by residues Gln-175, 213-217 (GEGKT), and Asp-714. 4 residues coordinate Zn(2+): Cys-1106, Cys-1108, Cys-1117, and Cys-1118.

Belongs to the SecA family. As to quaternary structure, monomer and homodimer. Part of the essential Sec protein translocation apparatus which comprises SecA, SecYEG and auxiliary proteins SecDF. Other proteins may also be involved. The cofactor is Zn(2+).

It localises to the cell inner membrane. It is found in the cytoplasm. It carries out the reaction ATP + H2O + cellular proteinSide 1 = ADP + phosphate + cellular proteinSide 2.. Functionally, part of the Sec protein translocase complex. Interacts with the SecYEG preprotein conducting channel. Has a central role in coupling the hydrolysis of ATP to the transfer of proteins into and across the cell membrane, serving as an ATP-driven molecular motor driving the stepwise translocation of polypeptide chains across the membrane. The sequence is that of Protein translocase subunit SecA from Azobacteroides pseudotrichonymphae genomovar. CFP2.